The sequence spans 353 residues: Mannonate dehydratase (353 aa).

It belongs to the mannonate dehydratase family. The cofactor is Fe(2+). Requires Mn(2+) as cofactor.

It catalyses the reaction D-mannonate = 2-dehydro-3-deoxy-D-gluconate + H2O. The protein operates within carbohydrate metabolism; pentose and glucuronate interconversion. Its function is as follows. Catalyzes the dehydration of D-mannonate. In Burkholderia cenocepacia (strain ATCC BAA-245 / DSM 16553 / LMG 16656 / NCTC 13227 / J2315 / CF5610) (Burkholderia cepacia (strain J2315)), this protein is Mannonate dehydratase.